A 342-amino-acid polypeptide reads, in one-letter code: L-threonine 3-dehydrogenase (342 aa).

Position 38 (Cys38) interacts with Zn(2+). Catalysis depends on charge relay system residues Thr40 and His43. 6 residues coordinate Zn(2+): His63, Glu64, Cys93, Cys96, Cys99, and Cys107. NAD(+) is bound by residues Ile175, Asp195, Arg200, 262–264 (LGL), and 286–287 (IY).

It belongs to the zinc-containing alcohol dehydrogenase family. Homotetramer. The cofactor is Zn(2+).

The protein resides in the cytoplasm. It carries out the reaction L-threonine + NAD(+) = (2S)-2-amino-3-oxobutanoate + NADH + H(+). It functions in the pathway amino-acid degradation; L-threonine degradation via oxydo-reductase pathway; glycine from L-threonine: step 1/2. In terms of biological role, catalyzes the NAD(+)-dependent oxidation of L-threonine to 2-amino-3-ketobutyrate. This chain is L-threonine 3-dehydrogenase, found in Streptomyces avermitilis (strain ATCC 31267 / DSM 46492 / JCM 5070 / NBRC 14893 / NCIMB 12804 / NRRL 8165 / MA-4680).